The primary structure comprises 240 residues: UDP-2,3-diacylglucosamine hydrolase (240 aa).

The Mn(2+) site is built by Asp9, His11, Asp43, Asn81, and His116. Residue 81 to 82 (NR) coordinates substrate. Substrate contacts are provided by Asp124, Ser162, Lys166, Lys169, and His197. Residues His197 and His199 each coordinate Mn(2+).

The protein belongs to the LpxH family. Mn(2+) serves as cofactor.

It localises to the cell inner membrane. The enzyme catalyses UDP-2-N,3-O-bis[(3R)-3-hydroxytetradecanoyl]-alpha-D-glucosamine + H2O = 2-N,3-O-bis[(3R)-3-hydroxytetradecanoyl]-alpha-D-glucosaminyl 1-phosphate + UMP + 2 H(+). The protein operates within glycolipid biosynthesis; lipid IV(A) biosynthesis; lipid IV(A) from (3R)-3-hydroxytetradecanoyl-[acyl-carrier-protein] and UDP-N-acetyl-alpha-D-glucosamine: step 4/6. In terms of biological role, hydrolyzes the pyrophosphate bond of UDP-2,3-diacylglucosamine to yield 2,3-diacylglucosamine 1-phosphate (lipid X) and UMP by catalyzing the attack of water at the alpha-P atom. Involved in the biosynthesis of lipid A, a phosphorylated glycolipid that anchors the lipopolysaccharide to the outer membrane of the cell. The chain is UDP-2,3-diacylglucosamine hydrolase from Neisseria meningitidis serogroup B (strain ATCC BAA-335 / MC58).